Here is a 65-residue protein sequence, read N- to C-terminus: Potassium channel toxin kappa-KTx 2.6 (65 aa).

An N-terminal signal peptide occupies residues 1-27 (MKTSKMICAFLLVLVVGTFNDISGAYG). Residues 28–39 (EYVEDQHSFKIE) constitute a propeptide that is removed on maturation. 2 cysteine pairs are disulfide-bonded: cysteine 45–cysteine 63 and cysteine 49–cysteine 59.

It belongs to the short scorpion toxin superfamily. Potassium channel inhibitor kappa-KTx family. Kappa-KTx 2 subfamily. Expressed by the venom gland.

It localises to the secreted. In terms of biological role, potassium channel inhibitor (Kv). This Opisthacanthus cayaporum (South American scorpion) protein is Potassium channel toxin kappa-KTx 2.6.